Reading from the N-terminus, the 446-residue chain is Glycogen synthase (446 aa).

Arginine 15 is a binding site for ADP-alpha-D-glucose.

It belongs to the glycosyltransferase 1 family. Bacterial/plant glycogen synthase subfamily.

It carries out the reaction [(1-&gt;4)-alpha-D-glucosyl](n) + ADP-alpha-D-glucose = [(1-&gt;4)-alpha-D-glucosyl](n+1) + ADP + H(+). The protein operates within glycan biosynthesis; glycogen biosynthesis. Functionally, synthesizes alpha-1,4-glucan chains using ADP-glucose. This is Glycogen synthase from Deinococcus deserti (strain DSM 17065 / CIP 109153 / LMG 22923 / VCD115).